The primary structure comprises 600 residues: NADH-quinone oxidoreductase subunit C/D (600 aa).

Positions 1–190 (MIDLMPKKNT…EPFFLNEQKE (190 aa)) are NADH dehydrogenase I subunit C. The interval 214-600 (EFMFLNLGPN…IDFVMSDVDR (387 aa)) is NADH dehydrogenase I subunit D.

This sequence in the N-terminal section; belongs to the complex I 30 kDa subunit family. It in the C-terminal section; belongs to the complex I 49 kDa subunit family. In terms of assembly, NDH-1 is composed of 13 different subunits. Subunits NuoB, CD, E, F, and G constitute the peripheral sector of the complex.

The protein resides in the cell membrane. The enzyme catalyses a quinone + NADH + 5 H(+)(in) = a quinol + NAD(+) + 4 H(+)(out). In terms of biological role, NDH-1 shuttles electrons from NADH, via FMN and iron-sulfur (Fe-S) centers, to quinones in the respiratory chain. The immediate electron acceptor for the enzyme in this species is believed to be ubiquinone. Couples the redox reaction to proton translocation (for every two electrons transferred, four hydrogen ions are translocated across the cytoplasmic membrane), and thus conserves the redox energy in a proton gradient. This Buchnera aphidicola subsp. Acyrthosiphon pisum (strain Tuc7) protein is NADH-quinone oxidoreductase subunit C/D.